Here is a 658-residue protein sequence, read N- to C-terminus: DNA mismatch repair protein MutL (658 aa).

The segment covering 114-130 has biased composition (basic and acidic residues); the sequence is RQEDSSHATQVKAEDGK. Disordered stretches follow at residues 114 to 137 and 369 to 391; these read RQED…PTAA and DYPT…TAPM.

Belongs to the DNA mismatch repair MutL/HexB family.

This protein is involved in the repair of mismatches in DNA. It is required for dam-dependent methyl-directed DNA mismatch repair. May act as a 'molecular matchmaker', a protein that promotes the formation of a stable complex between two or more DNA-binding proteins in an ATP-dependent manner without itself being part of a final effector complex. This is DNA mismatch repair protein MutL from Neisseria meningitidis serogroup C (strain 053442).